The sequence spans 247 residues: ATP synthase subunit a 1 (247 aa).

6 consecutive transmembrane segments (helical) span residues 32-52 (YMLLAVVLIAGMMLAAGRALV), 82-102 (FFPLVFSLFMFIFVSNIVGII), 112-132 (IIVTFSLALLVFLTVIIYGFY), 141-161 (LFVPSGIPAVILPLVVVIEII), 181-201 (GHVTLKVFASFVTMLGALGFV), and 206-226 (ALLPLGLTVALTGLELMVAFL).

Belongs to the ATPase A chain family. F-type ATPases have 2 components, CF(1) - the catalytic core - and CF(0) - the membrane proton channel. CF(1) has five subunits: alpha(3), beta(3), gamma(1), delta(1), epsilon(1). CF(0) has four main subunits: a, b, b' and c.

The protein localises to the cell inner membrane. Functionally, key component of the proton channel; it plays a direct role in the translocation of protons across the membrane. The sequence is that of ATP synthase subunit a 1 from Bradyrhizobium sp. (strain BTAi1 / ATCC BAA-1182).